The following is a 304-amino-acid chain: Glutaminase (304 aa).

Substrate-binding residues include S63, N113, E157, N164, Y188, Y240, and V258.

This sequence belongs to the glutaminase family. As to quaternary structure, homotetramer.

It carries out the reaction L-glutamine + H2O = L-glutamate + NH4(+). In Paraburkholderia phytofirmans (strain DSM 17436 / LMG 22146 / PsJN) (Burkholderia phytofirmans), this protein is Glutaminase.